Reading from the N-terminus, the 407-residue chain is Transcriptional regulator UL34 (407 aa).

Residues 268–330 (AAGPPEADEN…ENEEEEEELF (63 aa)) are disordered. The span at 273–286 (EADENNDEGEEDDD) shows a compositional bias: acidic residues. The segment covering 287–301 (ELRHSDPAPLHDSKK) has biased composition (basic and acidic residues). Basic residues predominate over residues 302 to 312 (PRNARRPRTRV).

Belongs to the HHV-5 UL34 protein family.

The protein resides in the host nucleus. Acts as a transcriptional repressor of the US3 gene expression through a specific DNA sequence named the transcriptional repressive element (tre). This Homo sapiens (Human) protein is Transcriptional regulator UL34 (UL34).